The sequence spans 78 residues: Cytochrome c oxidase subunit 8, mitochondrial (78 aa).

A mitochondrion-targeting transit peptide spans 1–27; sequence MLCQQMIRTTAKRSSNIMTRPIIMKRS. Over 28–51 the chain is Mitochondrial matrix; it reads VHFKDGVYENIPFKVKGRKTPYAL. Residues 52-73 form a helical membrane-spanning segment; the sequence is SHFGFFAIGFAVPFVACYVQLK. Position 74 (Lys74) is a topological domain, mitochondrial intermembrane. The propeptide occupies 75-78; it reads SGAF.

Belongs to the cytochrome c oxidase VIIc family. Component of the cytochrome c oxidase (complex IV, CIV), a multisubunit enzyme composed of 12 subunits. The complex is composed of a catalytic core of 3 subunits COX1, COX2 and COX3, encoded in the mitochondrial DNA, and 9 supernumerary subunits COX4, COX5A (or COX5B), COX6, COX7, COX8, COX9, COX12, COX13 and COX26, which are encoded in the nuclear genome. The complex exists as a monomer or a dimer and forms supercomplexes (SCs) in the inner mitochondrial membrane with a dimer of ubiquinol-cytochrome c oxidoreductase (cytochrome b-c1 complex, complex III, CIII), resulting in 2 different assemblies (supercomplexes III(2)IV and III(2)IV(2)).

It localises to the mitochondrion inner membrane. Its pathway is energy metabolism; oxidative phosphorylation. In terms of biological role, component of the cytochrome c oxidase, the last enzyme in the mitochondrial electron transport chain which drives oxidative phosphorylation. The respiratory chain contains 3 multisubunit complexes succinate dehydrogenase (complex II, CII), ubiquinol-cytochrome c oxidoreductase (cytochrome b-c1 complex, complex III, CIII) and cytochrome c oxidase (complex IV, CIV), that cooperate to transfer electrons derived from NADH and succinate to molecular oxygen, creating an electrochemical gradient over the inner membrane that drives transmembrane transport and the ATP synthase. Cytochrome c oxidase is the component of the respiratory chain that catalyzes the reduction of oxygen to water. Electrons originating from reduced cytochrome c in the intermembrane space (IMS) are transferred via the dinuclear copper A center (CU(A)) of COX2 and heme A of COX1 to the active site in COX1, a binuclear center (BNC) formed by heme A3 and copper B (CU(B)). The BNC reduces molecular oxygen to 2 water molecules using 4 electrons from cytochrome c in the IMS and 4 protons from the mitochondrial matrix. The sequence is that of Cytochrome c oxidase subunit 8, mitochondrial (COX8) from Saccharomyces cerevisiae (strain ATCC 204508 / S288c) (Baker's yeast).